The following is a 297-amino-acid chain: UBX domain-containing protein 1 (297 aa).

Ala-2 is modified (N-acetylalanine). Residues 2–42 (AELTALESLIEMGFPRGRAEKALALTGNQGIEAAMDWLMEH) enclose the UBA domain. The disordered stretch occupies residues 38 to 214 (WLMEHEDDPD…PPTKREYDQC (177 aa)). The segment covering 42-52 (HEDDPDVDEPL) has biased composition (acidic residues). Residues 43 to 297 (EDDPDVDEPL…VLIVAKKCPS (255 aa)) are interaction with BRCA1. Basic and acidic residues-rich tracts occupy residues 86–122 (LTEE…EREK) and 137–177 (KLQE…ERAK). Ser-199 is modified (phosphoserine). Ser-200 bears the Phosphoserine; by MAPK12 mark. Thr-207 and Thr-229 each carry phosphothreonine. One can recognise a UBX domain in the interval 209–291 (REYDQCRIQV…GLVPSAVLIV (83 aa)). Ser-270 bears the Phosphoserine mark.

Interacts with MAVS; this interaction prevents MAVS oligomerization and thus disrupts the RLR signaling pathway. Interacts with CUL1; this interaction inhibits CUL1-mediated degradation of NF-kappa-B inhibitors. Interacts with BIRC2/c-IAP1; this interaction prevents TNFalpha-stimulated RIP1 ubiquitination and subsequent NF-kappa-B activation. Component of a complex required to couple retrotranslocation, ubiquitination and deglycosylation composed of NGLY1, SAKS1, AMFR, VCP and RAD23B. Interacts with HOMER2. Interacts directly with VCP. Interacts with BRCA1 and BARD1; interaction takes place when BRCA1 is not autoubiquitinated but is strongly enhanced in the presence of autoubiquitinated BRCA1.

The protein localises to the cytoplasm. Functionally, ubiquitin-binding protein that plays a role in the modulation of innate immune response. Blocks both the RIG-I-like receptors (RLR) and NF-kappa-B pathways. Following viral infection, UBXN1 is induced and recruited to the RLR component MAVS. In turn, interferes with MAVS oligomerization, and disrupts the MAVS/TRAF3/TRAF6 signalosome. This function probably serves as a brake to prevent excessive RLR signaling. Interferes with the TNFalpha-triggered NF-kappa-B pathway by interacting with cellular inhibitors of apoptosis proteins (cIAPs) and thereby inhibiting their recruitment to TNFR1. Also prevents the activation of NF-kappa-B by associating with CUL1 and thus inhibiting NF-kappa-B inhibitor alpha/NFKBIA degradation that remains bound to NF-kappa-B. Interacts with the BRCA1-BARD1 heterodimer and regulates its activity. Specifically binds 'Lys-6'-linked polyubiquitin chains. Interaction with autoubiquitinated BRCA1 leads to the inhibition of the E3 ubiquitin-protein ligase activity of the BRCA1-BARD1 heterodimer. Component of a complex required to couple deglycosylation and proteasome-mediated degradation of misfolded proteins in the endoplasmic reticulum that are retrotranslocated in the cytosol. This Mus musculus (Mouse) protein is UBX domain-containing protein 1 (Ubxn1).